We begin with the raw amino-acid sequence, 137 residues long: Small ribosomal subunit protein bS6 (137 aa).

A disordered region spans residues 99–137 (LSPMKAAESREDRRSGGDDRPRRSADSEERQSASQDEEE). Basic and acidic residues predominate over residues 105–129 (AESREDRRSGGDDRPRRSADSEERQ).

This sequence belongs to the bacterial ribosomal protein bS6 family.

Its function is as follows. Binds together with bS18 to 16S ribosomal RNA. This Marinobacter nauticus (strain ATCC 700491 / DSM 11845 / VT8) (Marinobacter aquaeolei) protein is Small ribosomal subunit protein bS6.